The following is a 276-amino-acid chain: Orotidine 5'-phosphate decarboxylase (276 aa).

The Proton donor role is filled by K93.

Belongs to the OMP decarboxylase family. Type 2 subfamily.

The enzyme catalyses orotidine 5'-phosphate + H(+) = UMP + CO2. It functions in the pathway pyrimidine metabolism; UMP biosynthesis via de novo pathway; UMP from orotate: step 2/2. This Halorubrum lacusprofundi (strain ATCC 49239 / DSM 5036 / JCM 8891 / ACAM 34) protein is Orotidine 5'-phosphate decarboxylase.